The primary structure comprises 371 residues: NADP-dependent oxidoreductase lnaE (371 aa).

NADP(+) is bound by residues 172 to 175, Lys198, Tyr214, Asn237, 277 to 283, and 307 to 309; these read DEIG, YGTIAEQ, and FGL.

This sequence belongs to the NADP-dependent oxidoreductase L4BD family.

It functions in the pathway secondary metabolite biosynthesis. Functionally, NADP-dependent oxidoreductase; part of the lna gene cluster that mediates the biosynthesis of diastereomeric piperazines. Lna and lnb clusters encode sets of enzymes that produce overlapping sets of previously undescribed metabolites such as piperazinomycin-like metabolites or morpholine. The lna and lnb biosynthetic pathways appear to be part of a signaling network that controls the formation of sclerotia, a resilient overwintering structure. One primary function of the non-canonical nonribosomal peptide synthetases lnaA and lnbA consists in the reduction of L-tyrosine. The presence in the clusters of tailoring enzymes such as the oxidoreductases lnaB, lnbB, lnaE or lnbE, as well as of the cytochrome P450 monooxygenases lnaC, lnaD, or lnbC, might explain formation of various diastereomeric piperazines. The polypeptide is NADP-dependent oxidoreductase lnaE (Aspergillus flavus (strain ATCC 200026 / FGSC A1120 / IAM 13836 / NRRL 3357 / JCM 12722 / SRRC 167)).